A 782-amino-acid polypeptide reads, in one-letter code: MFPPSGSTGLIPPSHFQARPLSTLPRMAPTWLSDIPLVQPPGHQDVSERRLDTQRPQVTMWERDVSSDRQEPGRRGRSWGLEGSQALSQQAEVIARQLQELRRLEEEVRLLRETSLQQKMRLEAQAMELEALARAEKAGRTEAEGLRAALAGAEVIRKNLEEGSQRELEEVQRLHQEQLSSLTQAHEEALSSLTSKAEGLEKSLSSLETRRAGEAKELAEAQREAELLRKQLSKTQEDLEAQVTLVENLRKYVGEQVPSEVHSQTWELERQKLLETMQHLQEDRDSLQATVELLQVRVQSLTHILALQEEELTRKVQPSDSLEPEFTRKCQFLLNRWREKVFALMVQLKAQELEHSDSVKQLKGQVASLQEQVTSQSQEQAILQRSLQDKAAEVEVERIGAKGLQLELSRAQEARHRWQQQTASAEEQLRLVVNAVSSSQIWLETTMAKVEEAAAQLPSLNNRLSYAVRKVHTIRGLIARKLALAQLRQESCPLPPPVADVSLELQQLREERNRLDAELQLSARLIQQEVGRAREQGEAERQQLSKVAQQLEQELQQTQESLASLGLQLEVARQGQQESTEEAASLRQELTQQQELYGQALQEKVAEVETQLREQLSDTERRLNEARREHAKAVVSLRQIQRRAAQEKERSQELRRLQEEARKEEGQRLARRLQELERDKNLMLATLQQEGLLSRYKQQRLLTVLPSLLDKKKSVVSSPRPPECSASAPIAAAVPTRESIKGSLSVLLDDLQGLSEAISKEEAVCQGDNLDRCSSSNPQMSS.

Basic and acidic residues-rich tracts occupy residues 62 to 74 (ERDV…EPGR) and 208 to 218 (ETRRAGEAKEL). 2 disordered regions span residues 62–82 (ERDV…WGLE) and 191–218 (SSLT…AKEL). 3 coiled-coil regions span residues 82 to 314 (EGSQ…ELTR), 344 to 435 (LMVQ…VVNA), and 498 to 691 (VADV…QQEG).

It is found in the cytoplasm. The protein localises to the nucleus. Its function is as follows. May be a regulator of keratinocyte proliferation or differentiation. This chain is Coiled-coil alpha-helical rod protein 1 (CCHCR1), found in Pongo pygmaeus (Bornean orangutan).